The following is a 156-amino-acid chain: Deoxyuridine 5'-triphosphate nucleotidohydrolase (156 aa).

Substrate is bound by residues Arg-76 to Gly-78, Asn-89, Thr-93 to Asp-95, and Lys-103.

It belongs to the dUTPase family. Mg(2+) is required as a cofactor.

It carries out the reaction dUTP + H2O = dUMP + diphosphate + H(+). The protein operates within pyrimidine metabolism; dUMP biosynthesis; dUMP from dCTP (dUTP route): step 2/2. Functionally, this enzyme is involved in nucleotide metabolism: it produces dUMP, the immediate precursor of thymidine nucleotides and it decreases the intracellular concentration of dUTP so that uracil cannot be incorporated into DNA. The polypeptide is Deoxyuridine 5'-triphosphate nucleotidohydrolase (Rhizobium rhizogenes (strain K84 / ATCC BAA-868) (Agrobacterium radiobacter)).